The chain runs to 203 residues: Small ribosomal subunit protein uS4 (203 aa).

The tract at residues 1–46 (MSKRQSAKYKLDRRMGENIWGRPKSPVNRREYGPGQHGQRRKGKMS) is disordered. The S4 RNA-binding domain maps to 94-157 (RRLDAVVYRA…QEMALVAEAQ (64 aa)).

This sequence belongs to the universal ribosomal protein uS4 family. Part of the 30S ribosomal subunit. Contacts protein S5. The interaction surface between S4 and S5 is involved in control of translational fidelity.

Functionally, one of the primary rRNA binding proteins, it binds directly to 16S rRNA where it nucleates assembly of the body of the 30S subunit. With S5 and S12 plays an important role in translational accuracy. The polypeptide is Small ribosomal subunit protein uS4 (Sphingopyxis alaskensis (strain DSM 13593 / LMG 18877 / RB2256) (Sphingomonas alaskensis)).